The following is a 270-amino-acid chain: tRNA pseudouridine synthase A (270 aa).

D60 serves as the catalytic Nucleophile. The segment at F107–F111 is RNA binding. Y118 lines the substrate pocket. Positions Q168–R172 are interaction with tRNA.

Belongs to the tRNA pseudouridine synthase TruA family. Homodimer.

The catalysed reaction is uridine(38/39/40) in tRNA = pseudouridine(38/39/40) in tRNA. In terms of biological role, formation of pseudouridine at positions 38, 39 and 40 in the anticodon stem and loop of transfer RNAs. This Klebsiella pneumoniae (strain 342) protein is tRNA pseudouridine synthase A.